Here is a 176-residue protein sequence, read N- to C-terminus: Cathelicidin-2 (176 aa).

The N-terminal stretch at 1–29 (METQGASLSLGRWSLWLLLLGLVVPLASA) is a signal peptide. Gln30 bears the Pyrrolidone carboxylic acid mark. The propeptide occupies 30–130 (QALSYREAVL…DINCNELQSV (101 aa)). Disulfide bonds link Cys85–Cys96 and Cys107–Cys124. A disordered region spans residues 135-176 (PIRRPPIRPPFNPPFRPPVRPPFRPPFRPPFRPPIGPFPGRR). A compositionally biased stretch (pro residues) spans 141-176 (IRPPFNPPFRPPVRPPFRPPFRPPFRPPIGPFPGRR). A Proline amide modification is found at Pro173. Residues 174–176 (GRR) constitute a propeptide, removed in mature form.

This sequence belongs to the cathelicidin family. Post-translationally, elastase is responsible for its maturation.

The protein resides in the secreted. In terms of biological role, binds to the lipid A moiety of bacterial lipopolysaccharides (LPS), a glycolipid present in the outer membrane of all Gram-negative bacteria. Shows a potent antimicrobial activity against the Gram-negative bacteria E.coli, S.typhimurium and P.aeruginosa. Less active against the Gram-positive bacteria S.aureus, L.monocytogenes and B.subtilis. In Capra hircus (Goat), this protein is Cathelicidin-2 (CATHL2).